We begin with the raw amino-acid sequence, 179 residues long: Large ribosomal subunit protein uL5 (179 aa).

It belongs to the universal ribosomal protein uL5 family. As to quaternary structure, part of the 50S ribosomal subunit; part of the 5S rRNA/L5/L18/L25 subcomplex. Contacts the 5S rRNA and the P site tRNA. Forms a bridge to the 30S subunit in the 70S ribosome.

This is one of the proteins that bind and probably mediate the attachment of the 5S RNA into the large ribosomal subunit, where it forms part of the central protuberance. In the 70S ribosome it contacts protein S13 of the 30S subunit (bridge B1b), connecting the 2 subunits; this bridge is implicated in subunit movement. Contacts the P site tRNA; the 5S rRNA and some of its associated proteins might help stabilize positioning of ribosome-bound tRNAs. This chain is Large ribosomal subunit protein uL5, found in Pasteurella multocida (strain Pm70).